The following is a 186-amino-acid chain: Probable RNA 2'-phosphotransferase (186 aa).

The protein belongs to the KptA/TPT1 family.

Removes the 2'-phosphate from RNA via an intermediate in which the phosphate is ADP-ribosylated by NAD followed by a presumed transesterification to release the RNA and generate ADP-ribose 1''-2''-cyclic phosphate (APPR&gt;P). May function as an ADP-ribosylase. The chain is Probable RNA 2'-phosphotransferase from Agrobacterium fabrum (strain C58 / ATCC 33970) (Agrobacterium tumefaciens (strain C58)).